A 311-amino-acid chain; its full sequence is ADP-ribosyl cyclase/cyclic ADP-ribose hydrolase 2 (311 aa).

Residues methionine 1–glycine 24 form the signal peptide. Disulfide bonds link cysteine 46–cysteine 60, cysteine 76–cysteine 156, and cysteine 137–cysteine 150. N-linked (GlcNAc...) asparagine glycosylation is found at asparagine 59 and asparagine 88. Tryptophan 102 serves as a coordination point for NAD(+). Tryptophan 102 lines the nicotinamide pocket. An N-linked (GlcNAc...) asparagine glycan is attached at asparagine 141. An NAD(+)-binding site is contributed by tryptophan 165. The N-linked (GlcNAc...) asparagine glycan is linked to asparagine 185. Position 203 (glutamate 203) interacts with NAD(+). Disulfide bonds link cysteine 231/cysteine 252 and cysteine 264/cysteine 273. The GPI-anchor amidated serine moiety is linked to residue serine 286. A propeptide spanning residues alanine 287 to alanine 311 is cleaved from the precursor.

Belongs to the ADP-ribosyl cyclase family. As to quaternary structure, homodimer. As to expression, expressed in the bone marrow, spleen and thymus in lymphoid organs, and the lung, kidney and heart in non-lymphoid organs.

It localises to the cell membrane. The catalysed reaction is NAD(+) + H2O = ADP-D-ribose + nicotinamide + H(+). The enzyme catalyses NAD(+) = cyclic ADP-beta-D-ribose + nicotinamide + H(+). It catalyses the reaction cyclic ADP-beta-D-ribose + H2O = ADP-D-ribose. Functionally, catalyzes both the synthesis of cyclic ADP-beta-D-ribose (cADPR) from NAD(+), and its hydrolysis to ADP-D-ribose (ADPR). Cyclic ADPR is known to serve as an endogenous second messenger that elicits calcium release from intracellular stores, and thus regulates the mobilization of intracellular calcium. May be involved in pre-B-cell growth. This is ADP-ribosyl cyclase/cyclic ADP-ribose hydrolase 2 (Bst1) from Mus musculus (Mouse).